The chain runs to 962 residues: Glycine dehydrogenase (decarboxylating) (962 aa).

Residue Lys709 is modified to N6-(pyridoxal phosphate)lysine.

Belongs to the GcvP family. The glycine cleavage system is composed of four proteins: P, T, L and H. Pyridoxal 5'-phosphate is required as a cofactor.

The enzyme catalyses N(6)-[(R)-lipoyl]-L-lysyl-[glycine-cleavage complex H protein] + glycine + H(+) = N(6)-[(R)-S(8)-aminomethyldihydrolipoyl]-L-lysyl-[glycine-cleavage complex H protein] + CO2. In terms of biological role, the glycine cleavage system catalyzes the degradation of glycine. The P protein binds the alpha-amino group of glycine through its pyridoxal phosphate cofactor; CO(2) is released and the remaining methylamine moiety is then transferred to the lipoamide cofactor of the H protein. This chain is Glycine dehydrogenase (decarboxylating), found in Shewanella sp. (strain ANA-3).